The primary structure comprises 945 residues: Translation initiation factor IF-2 (945 aa).

Disordered stretches follow at residues 52-80 (RSHGQSQPKGKITLTRKQTSEIRATDSSG) and 96-357 (MKRD…FQAP). Acidic residues predominate over residues 153–175 (PEPEPIVEPEPEPEPEPEPEPQP). Basic and acidic residues-rich tracts occupy residues 215-283 (DEER…KEAA) and 294-310 (AKTEEKPAGKDAKRTAR). A tr-type G domain is found at 445-614 (PRAPVVTVMG…LLQAEVLELT (170 aa)). Residues 454-461 (GHVDHGKT) form a G1 region. Residue 454 to 461 (GHVDHGKT) participates in GTP binding. The segment at 479-483 (GITQH) is G2. A G3 region spans residues 500–503 (DTPG). Residues 500-504 (DTPGH) and 554-557 (NKID) each bind GTP. The interval 554–557 (NKID) is G4. The G5 stretch occupies residues 590–592 (SAK).

The protein belongs to the TRAFAC class translation factor GTPase superfamily. Classic translation factor GTPase family. IF-2 subfamily.

The protein resides in the cytoplasm. Its function is as follows. One of the essential components for the initiation of protein synthesis. Protects formylmethionyl-tRNA from spontaneous hydrolysis and promotes its binding to the 30S ribosomal subunits. Also involved in the hydrolysis of GTP during the formation of the 70S ribosomal complex. In Aromatoleum aromaticum (strain DSM 19018 / LMG 30748 / EbN1) (Azoarcus sp. (strain EbN1)), this protein is Translation initiation factor IF-2.